Reading from the N-terminus, the 353-residue chain is Photosystem II D2 protein (353 aa).

At threonine 2 the chain carries N-acetylthreonine. The residue at position 2 (threonine 2) is a Phosphothreonine. A helical transmembrane segment spans residues 41–61; sequence CAYFALGGWFTGTTFVTSWYT. Histidine 118 is a binding site for chlorophyll a. A helical membrane pass occupies residues 125-141; that stretch reads GFMLRQFEIARSVQLRP. Positions 130 and 143 each coordinate pheophytin a. The helical transmembrane segment at 153 to 166 threads the bilayer; sequence VFVSVFLIYPLGQS. Residue histidine 198 participates in chlorophyll a binding. The chain crosses the membrane as a helical span at residues 208–228; that stretch reads AALLCAIHGATVENTLFEDGD. Residues histidine 215 and phenylalanine 262 each contribute to the a plastoquinone site. Histidine 215 lines the Fe cation pocket. Histidine 269 is a Fe cation binding site. Residues 279-295 traverse the membrane as a helical segment; the sequence is GLWMSALGVVGLALNLR.

It belongs to the reaction center PufL/M/PsbA/D family. PSII is composed of 1 copy each of membrane proteins PsbA, PsbB, PsbC, PsbD, PsbE, PsbF, PsbH, PsbI, PsbJ, PsbK, PsbL, PsbM, PsbT, PsbX, PsbY, PsbZ, Psb30/Ycf12, at least 3 peripheral proteins of the oxygen-evolving complex and a large number of cofactors. It forms dimeric complexes. It depends on The D1/D2 heterodimer binds P680, chlorophylls that are the primary electron donor of PSII, and subsequent electron acceptors. It shares a non-heme iron and each subunit binds pheophytin, quinone, additional chlorophylls, carotenoids and lipids. There is also a Cl(-1) ion associated with D1 and D2, which is required for oxygen evolution. The PSII complex binds additional chlorophylls, carotenoids and specific lipids. as a cofactor.

The protein localises to the plastid. It is found in the chloroplast thylakoid membrane. It carries out the reaction 2 a plastoquinone + 4 hnu + 2 H2O = 2 a plastoquinol + O2. Its function is as follows. Photosystem II (PSII) is a light-driven water:plastoquinone oxidoreductase that uses light energy to abstract electrons from H(2)O, generating O(2) and a proton gradient subsequently used for ATP formation. It consists of a core antenna complex that captures photons, and an electron transfer chain that converts photonic excitation into a charge separation. The D1/D2 (PsbA/PsbD) reaction center heterodimer binds P680, the primary electron donor of PSII as well as several subsequent electron acceptors. D2 is needed for assembly of a stable PSII complex. This is Photosystem II D2 protein from Oenothera argillicola (Appalachian evening primrose).